Consider the following 295-residue polypeptide: Protease HtpX (295 aa).

The next 2 membrane-spanning stretches (helical) occupy residues 4–24 and 42–62; these read ILLF…TLSL and QLLV…LFIS. A Zn(2+)-binding site is contributed by His147. Glu148 is an active-site residue. Residue His151 participates in Zn(2+) binding. Transmembrane regions (helical) follow at residues 158–178 and 199–219; these read VTLA…ARII and ITTI…VMWF. Glu224 contributes to the Zn(2+) binding site.

Belongs to the peptidase M48B family. Zn(2+) serves as cofactor.

It localises to the cell inner membrane. In Pseudomonas savastanoi pv. phaseolicola (strain 1448A / Race 6) (Pseudomonas syringae pv. phaseolicola (strain 1448A / Race 6)), this protein is Protease HtpX.